The chain runs to 546 residues: Putative serine/threonine-protein kinase L268 (546 aa).

A Cyclin N-terminal domain is found at 1 to 112; the sequence is MVCFSKYSGI…ILQTLDFHLV (112 aa). Residues 260–544 form the Protein kinase domain; the sequence is ITVVKNLGEG…QTLEEFNKFN (285 aa). Residues 266–274 and K287 contribute to the ATP site; that span reads LGEGTYGTV. The Proton acceptor role is filled by D389.

The protein belongs to the protein kinase superfamily. Ser/Thr protein kinase family.

The catalysed reaction is L-seryl-[protein] + ATP = O-phospho-L-seryl-[protein] + ADP + H(+). It carries out the reaction L-threonyl-[protein] + ATP = O-phospho-L-threonyl-[protein] + ADP + H(+). The polypeptide is Putative serine/threonine-protein kinase L268 (Acanthamoeba polyphaga mimivirus (APMV)).